Consider the following 204-residue polypeptide: Cytochrome c biogenesis ATP-binding export protein CcmA (204 aa).

Residues 2–203 enclose the ABC transporter domain; that stretch reads LEADNLECVR…PAGTVRELRL (202 aa). Position 34–41 (34–41) interacts with ATP; sequence GRNGAGKT.

It belongs to the ABC transporter superfamily. CcmA exporter (TC 3.A.1.107) family. The complex is composed of two ATP-binding proteins (CcmA) and two transmembrane proteins (CcmB).

It is found in the cell inner membrane. The catalysed reaction is heme b(in) + ATP + H2O = heme b(out) + ADP + phosphate + H(+). Its function is as follows. Part of the ABC transporter complex CcmAB involved in the biogenesis of c-type cytochromes; once thought to export heme, this seems not to be the case, but its exact role is uncertain. Responsible for energy coupling to the transport system. In Dechloromonas aromatica (strain RCB), this protein is Cytochrome c biogenesis ATP-binding export protein CcmA.